A 407-amino-acid chain; its full sequence is Phosphopentomutase (407 aa).

Mn(2+) contacts are provided by D10, D306, H311, D347, H348, and H359.

The protein belongs to the phosphopentomutase family. The cofactor is Mn(2+).

It is found in the cytoplasm. It carries out the reaction 2-deoxy-alpha-D-ribose 1-phosphate = 2-deoxy-D-ribose 5-phosphate. It catalyses the reaction alpha-D-ribose 1-phosphate = D-ribose 5-phosphate. It participates in carbohydrate degradation; 2-deoxy-D-ribose 1-phosphate degradation; D-glyceraldehyde 3-phosphate and acetaldehyde from 2-deoxy-alpha-D-ribose 1-phosphate: step 1/2. Functionally, isomerase that catalyzes the conversion of deoxy-ribose 1-phosphate (dRib-1-P) and ribose 1-phosphate (Rib-1-P) to deoxy-ribose 5-phosphate (dRib-5-P) and ribose 5-phosphate (Rib-5-P), respectively. The protein is Phosphopentomutase of Salmonella schwarzengrund (strain CVM19633).